We begin with the raw amino-acid sequence, 311 residues long: Avirulence protein ATR1 (311 aa).

The N-terminal stretch at 1-15 (MRVCYFVLVPSVALA) is a signal peptide. A RxLR-dEER motif is present at residues 48-62 (RALRAQTALDDDEER). WY domain regions lie at residues 127-209 (DEAL…VKCV) and 210-311 (ESED…IYSV).

This sequence belongs to the RxLR effector family. As to quaternary structure, monomer. Interacts with defense protein RPP1 from several ecotypes including RPP1-NdA, RPP1-WsB, RPP1-EstA and RPP1-ZdrA, via their leucine-rich repeats (LLRs).

It is found in the secreted. It localises to the host cytoplasm. Secreted effector that acts as an elicitor of hypersensitive response (HR) specifically on plants carrying both defense protein RPP1 from several ecotypes including RPP1-NdA, RPP1-WsB, RPP1-EstA and RPP1-ZdrA. The chain is Avirulence protein ATR1 from Hyaloperonospora arabidopsidis (strain Emoy2) (Downy mildew agent).